Reading from the N-terminus, the 94-residue chain is DNA-binding protein HU (94 aa).

The disordered stretch occupies residues 56 to 94 (QKGKEGKVPGSDKTYKTEDKRVPKFKPGKTLKQKVEEGK). The span at 68 to 77 (KTYKTEDKRV) shows a compositional bias: basic and acidic residues. Residues 78–87 (PKFKPGKTLK) are compositionally biased toward basic residues.

The protein belongs to the bacterial histone-like protein family. In terms of assembly, homodimer.

Functionally, histone-like DNA-binding protein which is capable of wrapping DNA to stabilize it, and thus to prevent its denaturation under extreme environmental conditions. This is DNA-binding protein HU (hup) from Helicobacter pylori (strain ATCC 700392 / 26695) (Campylobacter pylori).